The sequence spans 122 residues: Large ribosomal subunit protein uL18 (122 aa).

The protein belongs to the universal ribosomal protein uL18 family. Part of the 50S ribosomal subunit; part of the 5S rRNA/L5/L18/L25 subcomplex. Contacts the 5S and 23S rRNAs.

This is one of the proteins that bind and probably mediate the attachment of the 5S RNA into the large ribosomal subunit, where it forms part of the central protuberance. The protein is Large ribosomal subunit protein uL18 of Buchnera aphidicola subsp. Acyrthosiphon pisum (strain 5A).